The chain runs to 282 residues: Light-independent protochlorophyllide reductase iron-sulfur ATP-binding protein (282 aa).

Residues 10–15 (GIGKST) and Lys39 each bind ATP. A Mg(2+)-binding site is contributed by Ser14. Cys95 and Cys129 together coordinate [4Fe-4S] cluster. 180 to 181 (NR) contributes to the ATP binding site.

The protein belongs to the NifH/BchL/ChlL family. As to quaternary structure, homodimer. Protochlorophyllide reductase is composed of three subunits; ChlL, ChlN and ChlB. It depends on [4Fe-4S] cluster as a cofactor.

The protein localises to the plastid. The protein resides in the cyanelle. The catalysed reaction is chlorophyllide a + oxidized 2[4Fe-4S]-[ferredoxin] + 2 ADP + 2 phosphate = protochlorophyllide a + reduced 2[4Fe-4S]-[ferredoxin] + 2 ATP + 2 H2O. It participates in porphyrin-containing compound metabolism; chlorophyll biosynthesis (light-independent). In terms of biological role, component of the dark-operative protochlorophyllide reductase (DPOR) that uses Mg-ATP and reduced ferredoxin to reduce ring D of protochlorophyllide (Pchlide) to form chlorophyllide a (Chlide). This reaction is light-independent. The L component serves as a unique electron donor to the NB-component of the complex, and binds Mg-ATP. This is Light-independent protochlorophyllide reductase iron-sulfur ATP-binding protein from Cyanophora paradoxa.